Here is a 583-residue protein sequence, read N- to C-terminus: Mitogen-activated protein kinase 4 (583 aa).

One can recognise a Protein kinase domain in the interval 20–312; that stretch reads FIDFQPLGFG…AEMGLQHPYM (293 aa). ATP-binding positions include 26–34 and Lys-49; that span reads LGFGVNGLV. Asp-149 (proton acceptor) is an active-site residue. Phosphoserine; by PAK1, PAK2 and PAK3 is present on Ser-186. An SEG motif motif is present at residues 186 to 188; the sequence is SEG. The FRIEDE motif motif lies at 328-333; it reads FRIEDE. 2 stretches are compositionally biased toward basic and acidic residues: residues 366 to 379 and 391 to 410; these read DRCQDASEVQRDPR and VDPRKDSQSSSERFLEQSHS. Residues 366–410 form a disordered region; the sequence is DRCQDASEVQRDPRAGSTPLAEDVQVDPRKDSQSSSERFLEQSHS. Ser-430 is modified (phosphoserine). Residues 495–531 are disordered; the sequence is STQSGSERASPPPDAPEPRLSASPPGHPTPIDGGASP.

The protein belongs to the protein kinase superfamily. CMGC Ser/Thr protein kinase family. MAP kinase subfamily. As to quaternary structure, homodimer. Heterodimer with ERK3/MAPK6. Interacts with (via FRIEDE motif) MAPKAPK5. The cofactor is Mg(2+). In terms of processing, phosphorylated at Ser-186 by PAK1, PAK2 and PAK3 resulting in catalytic activation. Phosphorylated by MAPKAPK5 at other sites.

Its subcellular location is the cytoplasm. The protein resides in the nucleus. The enzyme catalyses L-seryl-[protein] + ATP = O-phospho-L-seryl-[protein] + ADP + H(+). It catalyses the reaction L-threonyl-[protein] + ATP = O-phospho-L-threonyl-[protein] + ADP + H(+). With respect to regulation, activated by phosphorylation at Ser-186. Its function is as follows. Atypical MAPK protein. Phosphorylates microtubule-associated protein 2 (MAP2) and MAPKAPK5. The precise role of the complex formed with MAPKAPK5 is still unclear, but the complex follows a complex set of phosphorylation events: upon interaction with atypical MAPKAPK5, ERK4/MAPK4 is phosphorylated at Ser-186 and then mediates phosphorylation and activation of MAPKAPK5, which in turn phosphorylates ERK4/MAPK4. May promote entry in the cell cycle. In Mus musculus (Mouse), this protein is Mitogen-activated protein kinase 4 (Mapk4).